The sequence spans 591 residues: V-type ATP synthase alpha chain (591 aa).

Position 233-240 (233-240 (GPFGAGKT)) interacts with ATP.

It belongs to the ATPase alpha/beta chains family.

It carries out the reaction ATP + H2O + 4 H(+)(in) = ADP + phosphate + 5 H(+)(out). Functionally, produces ATP from ADP in the presence of a proton gradient across the membrane. The V-type alpha chain is a catalytic subunit. This Streptococcus pyogenes serotype M1 protein is V-type ATP synthase alpha chain.